Consider the following 253-residue polypeptide: Complement C1q subcomponent subunit B (253 aa).

An N-terminal signal peptide occupies residues 1–27 (MMMKIPWGSIPVLMLLLLLGLIDISQA). A Pyrrolidone carboxylic acid modification is found at Q28. A 4-hydroxyproline mark is found at P35, P38, P41, P53, and P56. Collagen-like domains lie at 37–86 (IPGI…PGNP) and 60–114 (GEKG…GESG). The interval 38-115 (PGIPGIPGTP…APGPKGESGD (78 aa)) is disordered. 2 positions are modified to 5-hydroxylysine: K59 and K62. Residue P65 is modified to 4-hydroxyproline. The segment covering 70 to 79 (DHGEFGEKGD) has biased composition (basic and acidic residues). 5-hydroxylysine is present on K77. A compositionally biased stretch (low complexity) spans 80 to 92 (PGIPGNPGKVGPK). A 4-hydroxyproline mark is found at P83 and P86. A 5-hydroxylysine mark is found at K92 and K98. A compositionally biased stretch (gly residues) spans 96-105 (GPKGGPGAPG). 4-hydroxyproline is present on residues P101, P104, and P107. A 5-hydroxylysine modification is found at K110. A C1q domain is found at 117 to 253 (KATQKIAFSA…GFLLFPDMEA (137 aa)). C181 and C198 are oxidised to a cystine. Ca(2+) is bound by residues D199, Y200, and Q206.

In terms of assembly, core component of the complement C1 complex, a calcium-dependent complex composed of 1 molecule of the C1Q subcomplex, 2 molecules of C1R and 2 molecules of C1S. The C1Q subcomplex is composed 18 subunits: 3 chains of C1QA, C1QB, and C1QC trimerize to form 6 collagen-like triple helices connected to six globular ligand-recognition modules (C1q domain). Post-translationally, hydroxylated on lysine and proline residues. Hydroxylated lysine residues can be glycosylated. Human C1Q contains up to 68.3 hydroxylysine-galactosylglucose residues and up to 2.5 hydroxylysine-galactose per molecule. Total percentage hydroxylysine residues glycosylated is 86.4%.

Its subcellular location is the secreted. The protein resides in the cell surface. The C1Q subcomplex is inhibited by sulfated molecules, such as triterpenoid sulfates, heparan sulfate, or chondroitin sulfates. Core component of the complement C1 complex, a multiprotein complex that initiates the classical pathway of the complement system, a cascade of proteins that leads to phagocytosis and breakdown of pathogens and signaling that strengthens the adaptive immune system. The classical complement pathway is initiated by the C1Q subcomplex of the C1 complex, which specifically binds IgG or IgM immunoglobulins complexed with antigens, forming antigen-antibody complexes on the surface of pathogens: C1QA, together with C1QB and C1QC, specifically recognizes and binds the Fc regions of IgG or IgM via its C1q domain. Immunoglobulin-binding activates the proenzyme C1R, which cleaves C1S, initiating the proteolytic cascade of the complement system. The C1Q subcomplex is activated by a hexamer of IgG complexed with antigens, while it is activated by a pentameric IgM. The C1Q subcomplex also recognizes and binds phosphatidylserine exposed on the surface of cells undergoing programmed cell death, possibly promoting activation of the complement system. The polypeptide is Complement C1q subcomponent subunit B (Homo sapiens (Human)).